The following is a 503-amino-acid chain: Probable cytosol aminopeptidase (503 aa).

Mn(2+) contacts are provided by Lys270 and Asp275. Lys282 is a catalytic residue. Mn(2+) contacts are provided by Asp293, Asp352, and Glu354. Arg356 is an active-site residue.

Belongs to the peptidase M17 family. Mn(2+) is required as a cofactor.

It localises to the cytoplasm. The catalysed reaction is Release of an N-terminal amino acid, Xaa-|-Yaa-, in which Xaa is preferably Leu, but may be other amino acids including Pro although not Arg or Lys, and Yaa may be Pro. Amino acid amides and methyl esters are also readily hydrolyzed, but rates on arylamides are exceedingly low.. It catalyses the reaction Release of an N-terminal amino acid, preferentially leucine, but not glutamic or aspartic acids.. Presumably involved in the processing and regular turnover of intracellular proteins. Catalyzes the removal of unsubstituted N-terminal amino acids from various peptides. This Serratia proteamaculans (strain 568) protein is Probable cytosol aminopeptidase.